The primary structure comprises 259 residues: Tryptophan synthase alpha chain (259 aa).

Catalysis depends on proton acceptor residues glutamate 48 and aspartate 59.

The protein belongs to the TrpA family. As to quaternary structure, tetramer of two alpha and two beta chains.

It catalyses the reaction (1S,2R)-1-C-(indol-3-yl)glycerol 3-phosphate + L-serine = D-glyceraldehyde 3-phosphate + L-tryptophan + H2O. The protein operates within amino-acid biosynthesis; L-tryptophan biosynthesis; L-tryptophan from chorismate: step 5/5. The alpha subunit is responsible for the aldol cleavage of indoleglycerol phosphate to indole and glyceraldehyde 3-phosphate. This is Tryptophan synthase alpha chain from Syntrophomonas wolfei subsp. wolfei (strain DSM 2245B / Goettingen).